The chain runs to 272 residues: 1,4-dihydroxy-2-naphthoyl-CoA synthase (272 aa).

Substrate-binding positions include arginine 33, serine 72 to glutamine 76, tyrosine 84, tyrosine 116 to glycine 120, threonine 142, serine 148, tyrosine 245, and lysine 260. Glutamine 141–glycine 143 contacts hydrogencarbonate. Residues glycine 253 to aspartate 264 show a composition bias toward basic and acidic residues. Positions glycine 253–proline 272 are disordered.

This sequence belongs to the enoyl-CoA hydratase/isomerase family. MenB subfamily. The cofactor is hydrogencarbonate.

The catalysed reaction is 2-succinylbenzoyl-CoA + H(+) = 1,4-dihydroxy-2-naphthoyl-CoA + H2O. It participates in quinol/quinone metabolism; 1,4-dihydroxy-2-naphthoate biosynthesis; 1,4-dihydroxy-2-naphthoate from chorismate: step 6/7. The protein operates within quinol/quinone metabolism; menaquinone biosynthesis. Its function is as follows. Converts o-succinylbenzoyl-CoA (OSB-CoA) to 1,4-dihydroxy-2-naphthoyl-CoA (DHNA-CoA). This is 1,4-dihydroxy-2-naphthoyl-CoA synthase from Staphylococcus saprophyticus subsp. saprophyticus (strain ATCC 15305 / DSM 20229 / NCIMB 8711 / NCTC 7292 / S-41).